Reading from the N-terminus, the 253-residue chain is MSWRLVYASTVGTSHISADLPCQDACQMQIAWLNDQQPLLSVFVADGAGSVSQGGEGAMLAVNEAMAYMSQKVQGGELGLNDVLATNMVLTIRQRLFAEAEAKELAVRDFACTFLGLISSPDGTLIMQIGDGGVVVDLGHGLQLPLTPMAGEYANMTHFITDEDAVSRLETFTSTGRAHKVAAFTDGIQRLALNMLDNSPHVPFFTPFFNGLAAATQEQLDLLPELLKQFLSSPAVNERTDDDKTLALALWAE.

Mn(2+) is required as a cofactor. Post-translationally, phosphorylated by YegI.

The enzyme catalyses O-phospho-L-seryl-[protein] + H2O = L-seryl-[protein] + phosphate. It catalyses the reaction O-phospho-L-threonyl-[protein] + H2O = L-threonyl-[protein] + phosphate. With respect to regulation, activity dramatically decreases in the presence of the general protein phosphatase inhibitor sodium phosphate. Slightly inhibited by sodium fluoride. Activity decreases in the presence of the metal chelator EDTA. Its function is as follows. PP2C-like phosphatase that can dephosphorylate YegI. In vitro, can hydrolyze p-nitrophenyl phosphate (pNPP) to p-nitrophenol. This Escherichia coli (strain K12) protein is Serine/threonine-protein phosphatase 3.